Reading from the N-terminus, the 86-residue chain is Translation initiation factor IF-1 2 (86 aa).

The S1-like domain maps to 1–72; that stretch reads MAKEELLEME…SKGRITFRHI (72 aa).

This sequence belongs to the IF-1 family. As to quaternary structure, component of the 30S ribosomal translation pre-initiation complex which assembles on the 30S ribosome in the order IF-2 and IF-3, IF-1 and N-formylmethionyl-tRNA(fMet); mRNA recruitment can occur at any time during PIC assembly.

Its subcellular location is the cytoplasm. One of the essential components for the initiation of protein synthesis. Stabilizes the binding of IF-2 and IF-3 on the 30S subunit to which N-formylmethionyl-tRNA(fMet) subsequently binds. Helps modulate mRNA selection, yielding the 30S pre-initiation complex (PIC). Upon addition of the 50S ribosomal subunit IF-1, IF-2 and IF-3 are released leaving the mature 70S translation initiation complex. This Polynucleobacter asymbioticus (strain DSM 18221 / CIP 109841 / QLW-P1DMWA-1) (Polynucleobacter necessarius subsp. asymbioticus) protein is Translation initiation factor IF-1 2.